The chain runs to 359 residues: Dual-specificity RNA methyltransferase RlmN (359 aa).

E102 serves as the catalytic Proton acceptor. The Radical SAM core domain occupies 108–351 (EKKRATLCIS…IRKNRGSDIQ (244 aa)). An intrachain disulfide couples C115 to C354. [4Fe-4S] cluster contacts are provided by C122, C126, and C129. S-adenosyl-L-methionine contacts are provided by residues 178–179 (GE), S210, 232–234 (SLH), and N311. The active-site S-methylcysteine intermediate is the C354.

Belongs to the radical SAM superfamily. RlmN family. It depends on [4Fe-4S] cluster as a cofactor.

Its subcellular location is the cytoplasm. The catalysed reaction is adenosine(2503) in 23S rRNA + 2 reduced [2Fe-2S]-[ferredoxin] + 2 S-adenosyl-L-methionine = 2-methyladenosine(2503) in 23S rRNA + 5'-deoxyadenosine + L-methionine + 2 oxidized [2Fe-2S]-[ferredoxin] + S-adenosyl-L-homocysteine. It carries out the reaction adenosine(37) in tRNA + 2 reduced [2Fe-2S]-[ferredoxin] + 2 S-adenosyl-L-methionine = 2-methyladenosine(37) in tRNA + 5'-deoxyadenosine + L-methionine + 2 oxidized [2Fe-2S]-[ferredoxin] + S-adenosyl-L-homocysteine. Functionally, specifically methylates position 2 of adenine 2503 in 23S rRNA and position 2 of adenine 37 in tRNAs. m2A2503 modification seems to play a crucial role in the proofreading step occurring at the peptidyl transferase center and thus would serve to optimize ribosomal fidelity. The polypeptide is Dual-specificity RNA methyltransferase RlmN (Buchnera aphidicola subsp. Cinara cedri (strain Cc)).